The chain runs to 1244 residues: DNA polymerase beta (1244 aa).

Tandem repeats lie at residues 1069-1072 (AGNP), 1073-1076 (AGNP), 1077-1080 (AGNP), 1081-1084 (AGNP), 1085-1088 (AGNP), 1089-1092 (AGNP), 1093-1096 (AGNP), 1097-1100 (AGNP), 1101-1104 (AGNP), 1105-1108 (AGNP), 1109-1112 (AGNP), 1113-1116 (AGNP), and 1117-1120 (AGNP). The tract at residues 1069–1118 (AGNPAGNPAGNPAGNPAGNPAGNPAGNPAGNPAGNPAGNPAGNPAGNPAG) is disordered. The segment at 1069-1120 (AGNPAGNPAGNPAGNPAGNPAGNPAGNPAGNPAGNPAGNPAGNPAGNPAGNP) is 13 X 4 AA tandem repeats of A-G-N-P.

This sequence belongs to the DNA polymerase type-B family.

The enzyme catalyses DNA(n) + a 2'-deoxyribonucleoside 5'-triphosphate = DNA(n+1) + diphosphate. Its function is as follows. DNA-directed DNA polymerase involved in viral DNA replication. The protein is DNA polymerase beta (DPOL) of African swine fever virus (isolate Pig/Portugal/Lis 60/1960) (ASFV).